A 326-amino-acid polypeptide reads, in one-letter code: Beta-ketoacyl-[acyl-carrier-protein] synthase III (326 aa).

Active-site residues include Cys120 and His253. The ACP-binding stretch occupies residues 254–258 (QANIR). Asn283 is a catalytic residue.

This sequence belongs to the thiolase-like superfamily. FabH family. Homodimer.

It is found in the cytoplasm. The enzyme catalyses malonyl-[ACP] + acetyl-CoA + H(+) = 3-oxobutanoyl-[ACP] + CO2 + CoA. It functions in the pathway lipid metabolism; fatty acid biosynthesis. Catalyzes the condensation reaction of fatty acid synthesis by the addition to an acyl acceptor of two carbons from malonyl-ACP. Catalyzes the first condensation reaction which initiates fatty acid synthesis and may therefore play a role in governing the total rate of fatty acid production. Possesses both acetoacetyl-ACP synthase and acetyl transacylase activities. Its substrate specificity determines the biosynthesis of branched-chain and/or straight-chain of fatty acids. This Ralstonia nicotianae (strain ATCC BAA-1114 / GMI1000) (Ralstonia solanacearum) protein is Beta-ketoacyl-[acyl-carrier-protein] synthase III.